The chain runs to 298 residues: MQLEKMITEGSNAASAEIDRVSTLEMCRIINDEDKTVPLAVERVLPDIAAAIDVIHTQVSGGGRLIYLGAGTSGRLGILDASECPPTYGVKPGLVVGLIAGGEYAIQHAVEGAEDSREGGVNDLKNINLTAQDVVVGIAASGRTPYVIAGLEYARQLGCRTVGISCNPGSAVSSTAEFAITPVVGAEVVTGSSRMKAGTAQKLVLNMLSTGLMIKSGKVFGNLMVDVVATNEKLHVRQVNIVKNATGCNAEQAEAALIACERNCKTAIVMVLKNLDADEAKKCLDQHGGFIRKALEKE.

The SIS domain maps to 55–218 (IHTQVSGGGR…STGLMIKSGK (164 aa)). Glu-83 serves as the catalytic Proton donor. Glu-114 is a catalytic residue.

Belongs to the GCKR-like family. MurNAc-6-P etherase subfamily. Homodimer.

It catalyses the reaction N-acetyl-D-muramate 6-phosphate + H2O = N-acetyl-D-glucosamine 6-phosphate + (R)-lactate. Its pathway is amino-sugar metabolism; 1,6-anhydro-N-acetylmuramate degradation. It participates in amino-sugar metabolism; N-acetylmuramate degradation. The protein operates within cell wall biogenesis; peptidoglycan recycling. Functionally, specifically catalyzes the cleavage of the D-lactyl ether substituent of MurNAc 6-phosphate, producing GlcNAc 6-phosphate and D-lactate. Together with AnmK, is also required for the utilization of anhydro-N-acetylmuramic acid (anhMurNAc) either imported from the medium or derived from its own cell wall murein, and thus plays a role in cell wall recycling. The polypeptide is N-acetylmuramic acid 6-phosphate etherase (Escherichia coli O1:K1 / APEC).